Here is a 188-residue protein sequence, read N- to C-terminus: GTP cyclohydrolase 1 (188 aa).

Positions 78, 81, and 150 each coordinate Zn(2+).

The protein belongs to the GTP cyclohydrolase I family. Toroid-shaped homodecamer, composed of two pentamers of five dimers.

It catalyses the reaction GTP + H2O = 7,8-dihydroneopterin 3'-triphosphate + formate + H(+). It participates in cofactor biosynthesis; 7,8-dihydroneopterin triphosphate biosynthesis; 7,8-dihydroneopterin triphosphate from GTP: step 1/1. The chain is GTP cyclohydrolase 1 from Halalkalibacterium halodurans (strain ATCC BAA-125 / DSM 18197 / FERM 7344 / JCM 9153 / C-125) (Bacillus halodurans).